The chain runs to 316 residues: Transaldolase (316 aa).

Catalysis depends on Lys-127, which acts as the Schiff-base intermediate with substrate.

It belongs to the transaldolase family. Type 2 subfamily.

The protein localises to the cytoplasm. It catalyses the reaction D-sedoheptulose 7-phosphate + D-glyceraldehyde 3-phosphate = D-erythrose 4-phosphate + beta-D-fructose 6-phosphate. It functions in the pathway carbohydrate degradation; pentose phosphate pathway; D-glyceraldehyde 3-phosphate and beta-D-fructose 6-phosphate from D-ribose 5-phosphate and D-xylulose 5-phosphate (non-oxidative stage): step 2/3. Its function is as follows. Transaldolase is important for the balance of metabolites in the pentose-phosphate pathway. The sequence is that of Transaldolase from Helicobacter pylori (strain Shi470).